Reading from the N-terminus, the 185-residue chain is MKLVSVALMYLGSLAFLGADTARLDVASEFRKKWNKWALSRGKRELRMSSSYPTGLADVKAGPAQTLIRPQDMKGASRSPEDSSPDAARIRVKRYRQSMNNFQGLRSFGCRFGTCTVQKLAHQIYQFTDKDKDNVAPRSKISPQGYGRRRRRSLPEAGPGRTLVSSKPQAHGAPAPPSGSAPHFL.

Residues 1 to 21 (MKLVSVALMYLGSLAFLGADT) form the signal peptide. Residue Arg41 is modified to Arginine amide. Positions 45-92 (ELRMSSSYPTGLADVKAGPAQTLIRPQDMKGASRSPEDSSPDAARIRV) are excised as a propeptide. Positions 60 to 87 (KAGPAQTLIRPQDMKGASRSPEDSSPDA) are disordered. Cys110 and Cys115 are oxidised to a cystine. The disordered stretch occupies residues 133–185 (DNVAPRSKISPQGYGRRRRRSLPEAGPGRTLVSSKPQAHGAPAPPSGSAPHFL). Tyr146 is subject to Tyrosine amide. A propeptide spans 148–185 (RRRRRSLPEAGPGRTLVSSKPQAHGAPAPPSGSAPHFL) (preproAM C-terminal fragment).

It belongs to the adrenomedullin family. Highest levels found in pheochromocytoma and adrenal medulla. Also found in lung, ventricle and kidney tissues.

It localises to the secreted. Adrenomedullin/ADM and proadrenomedullin N-20 terminal peptide/PAMP are peptide hormones that act as potent hypotensive and vasodilatator agents. Numerous actions have been reported most related to the physiologic control of fluid and electrolyte homeostasis. In the kidney, ADM is diuretic and natriuretic, and both ADM and PAMP inhibit aldosterone secretion by direct adrenal actions. In pituitary gland, both peptides at physiologically relevant doses inhibit basal ACTH secretion. Both peptides appear to act in brain and pituitary gland to facilitate the loss of plasma volume, actions which complement their hypotensive effects in blood vessels. In terms of biological role, ADM function is mediated by the CALCRL-RAMP2 and CALCRL-RAMP3 receptor complexes with ADM showing the highest potency for the CALCRL-RAMP2 complex. This Homo sapiens (Human) protein is Pro-adrenomedullin.